The following is a 138-amino-acid chain: Putative pre-16S rRNA nuclease (138 aa).

It belongs to the YqgF nuclease family.

The protein localises to the cytoplasm. Functionally, could be a nuclease involved in processing of the 5'-end of pre-16S rRNA. The protein is Putative pre-16S rRNA nuclease of Citrobacter koseri (strain ATCC BAA-895 / CDC 4225-83 / SGSC4696).